The chain runs to 427 residues: 4-hydroxy-3-methylbut-2-en-1-yl diphosphate synthase (flavodoxin) (427 aa).

The segment at 1–21 is disordered; the sequence is MNKLENTIDSDIAGPAPRHRT. Residues C310, C313, C356, and E363 each contribute to the [4Fe-4S] cluster site.

This sequence belongs to the IspG family. It depends on [4Fe-4S] cluster as a cofactor.

It catalyses the reaction (2E)-4-hydroxy-3-methylbut-2-enyl diphosphate + oxidized [flavodoxin] + H2O + 2 H(+) = 2-C-methyl-D-erythritol 2,4-cyclic diphosphate + reduced [flavodoxin]. It functions in the pathway isoprenoid biosynthesis; isopentenyl diphosphate biosynthesis via DXP pathway; isopentenyl diphosphate from 1-deoxy-D-xylulose 5-phosphate: step 5/6. Its function is as follows. Converts 2C-methyl-D-erythritol 2,4-cyclodiphosphate (ME-2,4cPP) into 1-hydroxy-2-methyl-2-(E)-butenyl 4-diphosphate. The chain is 4-hydroxy-3-methylbut-2-en-1-yl diphosphate synthase (flavodoxin) from Bradyrhizobium diazoefficiens (strain JCM 10833 / BCRC 13528 / IAM 13628 / NBRC 14792 / USDA 110).